The following is a 476-amino-acid chain: Adenosylhomocysteinase (476 aa).

The substrate site is built by T67, D142, and E202. 203–205 provides a ligand contact to NAD(+); that stretch reads TTT. 2 residues coordinate substrate: K232 and D236. Residues N237, 266-271, E289, N324, 345-347, and N390 each bind NAD(+); these read GYGDVG and IGH.

Belongs to the adenosylhomocysteinase family. NAD(+) serves as cofactor.

It is found in the cytoplasm. The catalysed reaction is S-adenosyl-L-homocysteine + H2O = L-homocysteine + adenosine. It functions in the pathway amino-acid biosynthesis; L-homocysteine biosynthesis; L-homocysteine from S-adenosyl-L-homocysteine: step 1/1. Its function is as follows. May play a key role in the regulation of the intracellular concentration of adenosylhomocysteine. This Synechococcus sp. (strain CC9605) protein is Adenosylhomocysteinase.